The sequence spans 497 residues: 3-octaprenyl-4-hydroxybenzoate carboxy-lyase (497 aa).

N175 serves as a coordination point for Mn(2+). Residues I178–R180, R192–L194, and R197–G198 each bind prenylated FMN. Residue E241 coordinates Mn(2+). The active-site Proton donor is D290.

This sequence belongs to the UbiD family. In terms of assembly, homohexamer. Requires prenylated FMN as cofactor. Mn(2+) is required as a cofactor.

It is found in the cell membrane. The enzyme catalyses a 4-hydroxy-3-(all-trans-polyprenyl)benzoate + H(+) = a 2-(all-trans-polyprenyl)phenol + CO2. It functions in the pathway cofactor biosynthesis; ubiquinone biosynthesis. Its function is as follows. Catalyzes the decarboxylation of 3-octaprenyl-4-hydroxy benzoate to 2-octaprenylphenol, an intermediate step in ubiquinone biosynthesis. This Shigella boydii serotype 4 (strain Sb227) protein is 3-octaprenyl-4-hydroxybenzoate carboxy-lyase.